The sequence spans 453 residues: Ankyrin repeat and SOCS box protein 16 (453 aa).

ANK repeat units follow at residues C56–M85, K110–A139, G142–V171, E175–L204, S209–L238, Q242–A279, and K283–V312. One can recognise an SOCS box domain in the interval Y398–G450.

The protein belongs to the ankyrin SOCS box (ASB) family.

The protein operates within protein modification; protein ubiquitination. Functionally, may be a substrate-recognition component of a SCF-like ECS (Elongin-Cullin-SOCS-box protein) E3 ubiquitin-protein ligase complex which mediates the ubiquitination and subsequent proteasomal degradation of target proteins. This chain is Ankyrin repeat and SOCS box protein 16 (ASB16), found in Homo sapiens (Human).